A 159-amino-acid chain; its full sequence is Transcriptional repressor NrdR (159 aa).

A zinc finger spans residues Cys3–Cys34. An ATP-cone domain is found at Pro49–Asp139.

Belongs to the NrdR family. It depends on Zn(2+) as a cofactor.

Functionally, negatively regulates transcription of bacterial ribonucleotide reductase nrd genes and operons by binding to NrdR-boxes. The chain is Transcriptional repressor NrdR from Nitrosospira multiformis (strain ATCC 25196 / NCIMB 11849 / C 71).